The primary structure comprises 343 residues: Dihydroorotase (343 aa).

Histidine 14 and histidine 16 together coordinate Zn(2+). Substrate contacts are provided by residues 16-18 (HLR) and asparagine 42. Zn(2+)-binding residues include lysine 100, histidine 137, and histidine 175. N6-carboxylysine is present on lysine 100. Histidine 137 contacts substrate. Leucine 220 serves as a coordination point for substrate. Aspartate 248 contributes to the Zn(2+) binding site. The active site involves aspartate 248. Residues histidine 252 and alanine 264 each coordinate substrate.

It belongs to the metallo-dependent hydrolases superfamily. DHOase family. Class II DHOase subfamily. In terms of assembly, homodimer. The cofactor is Zn(2+).

The enzyme catalyses (S)-dihydroorotate + H2O = N-carbamoyl-L-aspartate + H(+). It functions in the pathway pyrimidine metabolism; UMP biosynthesis via de novo pathway; (S)-dihydroorotate from bicarbonate: step 3/3. In terms of biological role, catalyzes the reversible cyclization of carbamoyl aspartate to dihydroorotate. This Synechococcus sp. (strain CC9902) protein is Dihydroorotase.